Consider the following 497-residue polypeptide: Cytochrome P450 71A18 (497 aa).

A helical membrane pass occupies residues 4 to 24; sequence TLMVSLCLTTLLTLLLLKKFL. Heme is bound at residue cysteine 439.

This sequence belongs to the cytochrome P450 family. It depends on heme as a cofactor.

The protein localises to the membrane. The protein is Cytochrome P450 71A18 (CYP71A18) of Arabidopsis thaliana (Mouse-ear cress).